The following is a 72-amino-acid chain: SRY-related protein AES4 (72 aa).

Positions 1–69 (VKRPMNAFMV…KHMADYPDYK (69 aa)) form a DNA-binding region, HMG box.

The protein localises to the nucleus. In Alligator mississippiensis (American alligator), this protein is SRY-related protein AES4.